The sequence spans 115 residues: Transmembrane protein 218 (115 aa).

3 helical membrane passes run 5-25 (VLGV…VLLL), 38-58 (FSIV…LLFP), and 81-101 (YVLL…LLTH).

Belongs to the TMEM218 family. Interacts with TMEM67.

It is found in the membrane. The protein localises to the cell projection. The protein resides in the cilium. May be involved in ciliary biogenesis or function. In Mus musculus (Mouse), this protein is Transmembrane protein 218 (Tmem218).